The following is a 228-amino-acid chain: ATP synthase subunit a 2 (228 aa).

Transmembrane regions (helical) follow at residues 16 to 36 (VGTTVVTTWGIMVVLSLGAWL), 74 to 94 (VFPFVATLWLFIGIANLSSLI), 103 to 123 (DLSATTALALLVFFSVHWFGI), 139 to 159 (SPFLLPFHVIGEITRTLALAV), 173 to 193 (LLVLLVAGLFAPIPLLMLHIV), and 194 to 214 (EALVQAYIFGMLTLVYIAGAI).

This sequence belongs to the ATPase A chain family. In terms of assembly, F-type ATPases have 2 components, CF(1) - the catalytic core - and CF(0) - the membrane proton channel. CF(1) has five subunits: alpha(3), beta(3), gamma(1), delta(1), epsilon(1). CF(0) has three main subunits: a(1), b(2) and c(9-12). The alpha and beta chains form an alternating ring which encloses part of the gamma chain. CF(1) is attached to CF(0) by a central stalk formed by the gamma and epsilon chains, while a peripheral stalk is formed by the delta and b chains.

The protein localises to the cell inner membrane. Its function is as follows. Key component of the proton channel; it plays a direct role in the translocation of protons across the membrane. The protein is ATP synthase subunit a 2 of Pelobacter propionicus (strain DSM 2379 / NBRC 103807 / OttBd1).